The primary structure comprises 59 residues: uncharacterized protein (59 aa).

The disordered stretch occupies residues 1 to 59 (MAKKPGENTGKNGGIYQEVGPRGGKKDNFATVKDNERLPPTTKPGNGWVLDKRTPDSKK). Basic and acidic residues-rich tracts occupy residues 24 to 37 (GKKD…DNER) and 50 to 59 (LDKRTPDSKK).

This is an uncharacterized protein from Salmonella phage P22 (Bacteriophage P22).